We begin with the raw amino-acid sequence, 369 residues long: Histidinol-phosphate aminotransferase 3 (369 aa).

Lysine 220 carries the post-translational modification N6-(pyridoxal phosphate)lysine.

Belongs to the class-II pyridoxal-phosphate-dependent aminotransferase family. Histidinol-phosphate aminotransferase subfamily. As to quaternary structure, homodimer. Pyridoxal 5'-phosphate serves as cofactor.

It carries out the reaction L-histidinol phosphate + 2-oxoglutarate = 3-(imidazol-4-yl)-2-oxopropyl phosphate + L-glutamate. It participates in amino-acid biosynthesis; L-histidine biosynthesis; L-histidine from 5-phospho-alpha-D-ribose 1-diphosphate: step 7/9. The protein is Histidinol-phosphate aminotransferase 3 (hisC3) of Mesorhizobium japonicum (strain LMG 29417 / CECT 9101 / MAFF 303099) (Mesorhizobium loti (strain MAFF 303099)).